The chain runs to 1494 residues: ABC multidrug transporter atrG (1494 aa).

Polar residues predominate over residues 1 to 11 (MSLLGTINPNL). Disordered regions lie at residues 1–48 (MSLL…RTSD) and 84–105 (FSVS…TLNP). N-linked (GlcNAc...) asparagine glycosylation occurs at asparagine 41. Asparagine 141 and asparagine 340 each carry an N-linked (GlcNAc...) asparagine glycan. The region spanning 162–416 (LQVGALFRAV…FTTMGFECPE (255 aa)) is the ABC transporter 1 domain. 2 helical membrane passes run 527–547 (LTMS…SVFY) and 561–581 (ALLF…ILTL). A glycan (N-linked (GlcNAc...) asparagine) is linked at asparagine 622. A run of 3 helical transmembrane segments spans residues 636-656 (GPFF…SMLF), 669-689 (ALVP…FTIP), and 778-798 (GIMF…TEYI). A glycan (N-linked (GlcNAc...) asparagine) is linked at asparagine 835. An ABC transporter 2 domain is found at 852–1095 (FHWQDVCYDI…LASYFERNGA (244 aa)). Residue 888–895 (GVSGAGKT) coordinates ATP. 5 helical membrane passes run 1191-1211 (YIYS…FSFF), 1227-1247 (IFML…NFVT), 1276-1296 (LPWN…PIGL), 1312-1332 (LMWL…HMMI), and 1351-1371 (LCLI…FWIF). Residues asparagine 1410 and asparagine 1432 are each glycosylated (N-linked (GlcNAc...) asparagine). A helical membrane pass occupies residues 1463-1483 (FGIMWAFIVFNIAAAVFIYWL).

It belongs to the ABC transporter superfamily. ABCG family. PDR (TC 3.A.1.205) subfamily.

The protein localises to the cell membrane. It catalyses the reaction (R)-miconazole(in) + ATP + H2O = (R)-miconazole(out) + ADP + phosphate + H(+). In terms of biological role, pleiotropic ABC efflux transporter involved in the basal level of azole susceptibility. Confers resistance to miconazole and clotrimazole. The sequence is that of ABC multidrug transporter atrG from Aspergillus oryzae (strain ATCC 42149 / RIB 40) (Yellow koji mold).